A 424-amino-acid polypeptide reads, in one-letter code: MAKNIQAIRGMNDYLPGETAIWQRIEGTLKNVLGSYGYSEIRLPIVEQTPLFKRAIGEVTDVVEKEMYTFEDRNGDSLTLRPEGTAGCVRAGIEHGLLYNQEQRLWYIGPMFRHERPQKGRYRQFHQLGCEVFGLQGPDIDAELIMLTARWWRALGIFEHVTLELNSIGSLEARANYRDALVAFLEQHKEKLDEDCKRRMYTNPLRVLDSKNPEVQALLNDAPALGDYLDEESREHFAGLCKLLESAGIAYTVNQRLVRGLDYYNRTVFEWVTNSLGSQGTVCAGGRYDGLVEQLGGRATPAVGFAMGLERLVLLVQAVNPEFKADPVVDIYLVASGADTQSAAMALAERLRDELLGVKLMTNHGGGNFKKQFARADKWGARVAVVLGESEVANGTAVVKDLRSGEQTAVAQDSVAAHLRTLLG.

The protein belongs to the class-II aminoacyl-tRNA synthetase family. In terms of assembly, homodimer.

The protein localises to the cytoplasm. It catalyses the reaction tRNA(His) + L-histidine + ATP = L-histidyl-tRNA(His) + AMP + diphosphate + H(+). The sequence is that of Histidine--tRNA ligase from Shigella flexneri.